We begin with the raw amino-acid sequence, 1083 residues long: Ubiquitin-protein ligase E3C (1083 aa).

Composition is skewed to basic and acidic residues over residues methionine 1–threonine 10 and serine 20–glutamate 40. Residues methionine 1–glutamate 40 form a disordered region. The tract at residues methionine 1–arginine 60 is cis-determinant of acceptor ubiquitin-binding. An IQ domain is found at arginine 45 to aspartate 74. Residues alanine 354–valine 386 form a disordered region. The segment covering serine 366 to aspartate 376 has biased composition (acidic residues). One can recognise an HECT domain in the interval asparagine 744–serine 1083. A Glycyl lysine isopeptide (Lys-Gly) (interchain with G-Cter in ubiquitin); by autocatalysis cross-link involves residue lysine 903. Cysteine 1051 functions as the Glycyl thioester intermediate in the catalytic mechanism.

It belongs to the UBE3C family. In terms of assembly, interacts with 26S proteasomes. Interacts (via the HECT domain) with UBE2D1 and, less efficiently, with UBE2L3. In terms of processing, autoubiquitinated; promoting its own degradation.

The enzyme catalyses S-ubiquitinyl-[E2 ubiquitin-conjugating enzyme]-L-cysteine + [acceptor protein]-L-lysine = [E2 ubiquitin-conjugating enzyme]-L-cysteine + N(6)-ubiquitinyl-[acceptor protein]-L-lysine.. The protein operates within protein modification; protein ubiquitination. In terms of biological role, E3 ubiquitin-protein ligase that specifically catalyzes 'Lys-29'- and 'Lys-48'-linked polyubiquitin chains. Accepts ubiquitin from the E2 ubiquitin-conjugating enzyme UBE2D1 in the form of a thioester and then directly transfers the ubiquitin to targeted substrates. Associates with the proteasome and promotes elongation of ubiquitin chains on substrates bound to the 26S proteasome. Also catalyzes 'Lys-29'- and 'Lys-48'-linked ubiquitination of 26S proteasome subunit ADRM1/RPN13 in response to proteotoxic stress, impairing the ability of the proteasome to bind and degrade ubiquitin-conjugated proteins. Acts as a negative regulator of autophagy by mediating 'Lys-29'- and 'Lys-48'-linked ubiquitination of PIK3C3/VPS34, promoting its degradation. Can assemble unanchored poly-ubiquitin chains in either 'Lys-29'- or 'Lys-48'-linked polyubiquitin chains; with some preference for 'Lys-48' linkages. Acts as a negative regulator of type I interferon by mediating 'Lys-48'-linked ubiquitination of IRF3 and IRF7, leading to their degradation by the proteasome. Catalyzes ubiquitination and degradation of CAND2. This chain is Ubiquitin-protein ligase E3C, found in Mus musculus (Mouse).